The chain runs to 221 residues: Flavin-dependent thymidylate synthase (221 aa).

The 201-residue stretch at 9–209 (GFVKLLDHMG…PWTYESFIRY (201 aa)) folds into the ThyX domain. Residues serine 55, 78–80 (RHR), and glutamate 86 contribute to the FAD site. Residues 75–78 (QWMR), 86–90 (ELSGR), and arginine 148 each bind dUMP. Residues 78–88 (RHRIASYNELS) carry the ThyX motif motif. FAD contacts are provided by residues 164–166 (NAR) and asparagine 170. Arginine 175 contacts dUMP. Arginine 175 serves as the catalytic Involved in ionization of N3 of dUMP, leading to its activation.

It belongs to the thymidylate synthase ThyX family. As to quaternary structure, homotetramer. FAD is required as a cofactor.

It catalyses the reaction dUMP + (6R)-5,10-methylene-5,6,7,8-tetrahydrofolate + NADPH + H(+) = dTMP + (6S)-5,6,7,8-tetrahydrofolate + NADP(+). It participates in pyrimidine metabolism; dTTP biosynthesis. Functionally, catalyzes the reductive methylation of 2'-deoxyuridine-5'-monophosphate (dUMP) to 2'-deoxythymidine-5'-monophosphate (dTMP) while utilizing 5,10-methylenetetrahydrofolate (mTHF) as the methyl donor, and NADPH and FADH(2) as the reductant. This Pseudothermotoga lettingae (strain ATCC BAA-301 / DSM 14385 / NBRC 107922 / TMO) (Thermotoga lettingae) protein is Flavin-dependent thymidylate synthase.